A 298-amino-acid polypeptide reads, in one-letter code: MGNVQSQEGETRAHAVPSQDATTTPDNANNVPKEPRAQSMISIAADDLNQEGEMSDDNQQEGGNNRTSQNGTSGSSGHTKRRSQTSGKKTHQPYSGPCVPTIIRWRGGGEVVYVTGSFSRWKKKIQLLKSEDYTVLLQLRPGTQRFKFLVDGIWCCSSDFPTATDAEGNLYNYLEVEANEKLGASIDERLSQVHTDLPMEEKSESEQYSTEIPAFLTSNTLQELKLPKPPSLPPHLEKCILNSNTAYKEDQSVLPNPNHVLLNHLAAANTQLGVLALSATTRYHRKYVTTAMFKNFDV.

Positions 1–98 (MGNVQSQEGE…KTHQPYSGPC (98 aa)) are disordered. Residues 19–30 (QDATTTPDNANN) show a composition bias toward polar residues. Residues 48–59 (LNQEGEMSDDNQ) show a composition bias toward acidic residues. Residues 60–77 (QEGGNNRTSQNGTSGSSG) are compositionally biased toward polar residues. The span at 78–91 (HTKRRSQTSGKKTH) shows a compositional bias: basic residues. 250 to 252 (DQS) contacts ADP.

Belongs to the 5'-AMP-activated protein kinase beta subunit family. As to quaternary structure, AMPK is a heterotrimer of an alpha catalytic subunit (ssp2), a beta (amk2) and a gamma non-catalytic subunits (cbs2). The beta subunit serves as a bridge between the catalytic and the regulatory subunit.

Its subcellular location is the cytoplasm. Its function is as follows. Beta subunit of AMP-activated protein kinase (AMPK), which is required for transcriptional, metabolic, and developmental adaptations in response to glucose limitation. Has a structural role, mediating heterotrimer formation, and a regulatory role, defining carbon source-regulated subcellular location and substrate specificity of the AMPK kinase complex. The protein is 5'-AMP-activated protein kinase subunit beta (amk2) of Schizosaccharomyces pombe (strain 972 / ATCC 24843) (Fission yeast).